Here is a 366-residue protein sequence, read N- to C-terminus: Peptide chain release factor 1 (366 aa).

Glutamine 230 carries the N5-methylglutamine modification. Basic and acidic residues-rich tracts occupy residues alanine 283–alanine 293 and valine 315–proline 328. A disordered region spans residues alanine 283–glycine 335.

This sequence belongs to the prokaryotic/mitochondrial release factor family. In terms of processing, methylated by PrmC. Methylation increases the termination efficiency of RF1.

It localises to the cytoplasm. Its function is as follows. Peptide chain release factor 1 directs the termination of translation in response to the peptide chain termination codons UAG and UAA. This chain is Peptide chain release factor 1, found in Deinococcus deserti (strain DSM 17065 / CIP 109153 / LMG 22923 / VCD115).